The following is a 602-amino-acid chain: Major facilitator superfamily multidrug transporter mfsB (602 aa).

12 helical membrane-spanning segments follow: residues 29-49, 67-87, 98-118, 128-148, 160-180, 201-221, 329-349, 378-398, 411-431, 439-459, 468-486, and 505-525; these read FVLALCRICEPIAFMSIFPYV, LYAGLITSSFTFAEFSAGMFW, PVLIMGLIGTAISMIVFGFAP, ALGGLLNGNIGVLQTTVAEIV, IMPFVWCLGSIIGPAMGGALA, FLLPNLVCVVVLVFGVIVGFL, IVAYGILAYHSVSFDQLIPVF, FMLAVQGVYSMIAQLWLFPFV, VLLVWPPLYMLVPYLVLLPSI, LALISKITLHVIAFPSTAILL, VLGSINGAAASTASLSRAL, and IIAWWACGLVCVTGTIQSFWM. The interval 527–602 is disordered; sequence ESEPRRDSEK…RSNPLAFAED (76 aa). Residues 528–538 are compositionally biased toward basic and acidic residues; that stretch reads SEPRRDSEKAG.

It belongs to the major facilitator superfamily.

The protein resides in the membrane. In terms of biological role, major facilitator superfamily transporter that may be involved in A.fumigatus adaptation to azoles such as vorizonazole. The polypeptide is Major facilitator superfamily multidrug transporter mfsB (Aspergillus fumigatus (strain ATCC MYA-4609 / CBS 101355 / FGSC A1100 / Af293) (Neosartorya fumigata)).